A 248-amino-acid polypeptide reads, in one-letter code: Probable transcriptional regulatory protein trd_1132 (248 aa).

Belongs to the TACO1 family.

Its subcellular location is the cytoplasm. In Thermomicrobium roseum (strain ATCC 27502 / DSM 5159 / P-2), this protein is Probable transcriptional regulatory protein trd_1132.